A 228-amino-acid chain; its full sequence is 30 kDa heat shock protein (228 aa).

Disordered regions lie at residues 34–53 (EVQG…PTRT), 117–136 (KGEP…DVDE), and 144–174 (TATG…APAE). One can recognise a sHSP domain in the interval 49-228 (QPTRTFSPKF…KHETIRIAIN (180 aa)). Residues 144 to 158 (TATGANNQNNQQVAQ) are compositionally biased toward low complexity.

Belongs to the small heat shock protein (HSP20) family.

It is found in the cytoplasm. The protein is 30 kDa heat shock protein (hsp30) of Neurospora crassa (strain ATCC 24698 / 74-OR23-1A / CBS 708.71 / DSM 1257 / FGSC 987).